A 352-amino-acid polypeptide reads, in one-letter code: N-terminal EF-hand calcium-binding protein 1 (352 aa).

The residue at position 4 (S4) is a Phosphoserine. EF-hand domains lie at 26–61 (KGMS…GVLS) and 60–95 (LSGE…HLGE). Positions 39, 41, 43, 45, and 50 each coordinate Ca(2+). Positions 135-163 (LLKETLNQLQSLQNSLECAMETTEEQTRQ) form a coiled coil. The segment at 155–202 (ETTEEQTRQERQGPSKPEVLSIQWPGKRSSRRVQRHNSFSPNSPQFNV) is disordered. Residues 190-202 (HNSFSPNSPQFNV) are compositionally biased toward polar residues. Residues S192 and S197 each carry the phosphoserine modification. Residues 209–275 (EEDNQWMTQI…EEFQLALKHY (67 aa)) are a coiled coil. The 89-residue stretch at 252–340 (MLVQRQMSVT…LETPELTSTM (89 aa)) folds into the ABM domain.

Interacts with STX1. May interact with CPNE6.

The protein localises to the cytoplasm. This chain is N-terminal EF-hand calcium-binding protein 1 (Necab1), found in Rattus norvegicus (Rat).